A 629-amino-acid polypeptide reads, in one-letter code: Filament-like plant protein 2 (629 aa).

Coiled-coil stretches lie at residues 34 to 61 (WEKAENEVVELKQKLEDAADKNIVLEDR) and 102 to 171 (NTGL…LEAE). Residues 186-205 (SSNQSVDSHSDGGRERVEGS) form a disordered region. Residues 193–203 (SHSDGGRERVE) are compositionally biased toward basic and acidic residues. Residues 270–493 (ELSLMEKLEK…IEEKTMIKRE (224 aa)) adopt a coiled-coil conformation.

Belongs to the FPP family. In terms of assembly, interacts with WPP/MAF proteins. Binds to COG2; this interaction promotes the association between cortical microtubules and EXO70A1. In terms of tissue distribution, accumulates in preferentially xylem cells.

The protein localises to the vesicle. Functionally, ensures, when in complex with FPP3/VETH1 and COG2, the correct secondary cell wall (SCW) deposition pattern by recruiting exocyst components to cortical microtubules in xylem cells during secondary cell wall deposition by recruiting EXO70A1. In Arabidopsis thaliana (Mouse-ear cress), this protein is Filament-like plant protein 2.